A 568-amino-acid polypeptide reads, in one-letter code: Glucose-6-phosphate isomerase, cytosolic (568 aa).

The active-site Proton donor is E360. Residues H391 and K516 contribute to the active site.

The protein belongs to the GPI family. In terms of assembly, homodimer.

It localises to the cytoplasm. The enzyme catalyses alpha-D-glucose 6-phosphate = beta-D-fructose 6-phosphate. It participates in carbohydrate degradation; glycolysis; D-glyceraldehyde 3-phosphate and glycerone phosphate from D-glucose: step 2/4. This chain is Glucose-6-phosphate isomerase, cytosolic (PGIC), found in Oenothera sinuata var. hirsuta (Mexican evening primrose).